Consider the following 57-residue polypeptide: uncharacterized protein (57 aa).

A helical transmembrane segment spans residues 15–37 (GLAGLICIGLTISSGFSGSSILI).

The protein resides in the membrane. This is an uncharacterized protein from Dictyostelium discoideum (Social amoeba).